The following is a 534-amino-acid chain: EH domain-containing protein 1 (534 aa).

The residue at position 1 (methionine 1) is an N-acetylmethionine. The 232-residue stretch at phenylalanine 55–proline 286 folds into the Dynamin-type G domain. The G1 motif stretch occupies residues glycine 65 to threonine 72. Glycine 65–threonine 72 lines the ATP pocket. Positions glutamate 91–proline 92 are G2 motif. Positions aspartate 153 to glycine 156 are G3 motif. A coiled-coil region spans residues aspartate 198–glutamine 227. A G4 motif region spans residues asparagine 219 to aspartate 222. Lysine 220 contributes to the ATP binding site. Isoleucine 243 is a region of interest (G5 motif). Residue tryptophan 258 coordinates ATP. A phosphoserine mark is found at serine 355 and serine 456. Residues aspartate 444–arginine 532 enclose the EH domain. The 36-residue stretch at leucine 476 to lysine 511 folds into the EF-hand domain. Residues aspartate 489, aspartate 491, aspartate 493, and glutamate 500 each contribute to the Ca(2+) site.

The protein belongs to the TRAFAC class dynamin-like GTPase superfamily. Dynamin/Fzo/YdjA family. EHD subfamily. In terms of assembly, homooligomer, and heterooligomer with EHD2, EHD3 and EHD4, ATP-binding is required for heterooligomerization. Interacts (via EH domain) with MICALL1 (via NPF1 motif); the interaction is direct and recruits EHD1 to membranes. Interacts with RAB35; the interaction is indirect through MICALL1 and recruits EHD1 to membranes. Interacts (via EH domain) with PACSIN2 (via NPF motifs); regulates localization to tubular recycling endosome membranes. Interacts with PACSIN1. Interacts with RAB8A. Interacts with FER1L5 (via second C2 domain). Interacts with MYOF. Interacts with ZFYVE20. Interacts (via EH domain) with RAB11FIP2.

The protein localises to the recycling endosome membrane. The protein resides in the early endosome membrane. It localises to the cell membrane. It is found in the cell projection. Its subcellular location is the cilium membrane. ATP- and membrane-binding protein that controls membrane reorganization/tubulation upon ATP hydrolysis. Acts in early endocytic membrane fusion and membrane trafficking of recycling endosomes. Recruited to endosomal membranes upon nerve growth factor stimulation, indirectly regulates neurite outgrowth. Plays a role in myoblast fusion. Involved in the unidirectional retrograde dendritic transport of endocytosed BACE1 and in efficient sorting of BACE1 to axons implicating a function in neuronal APP processing. Plays a role in the formation of the ciliary vesicle (CV), an early step in cilium biogenesis. Proposed to be required for the fusion of distal appendage vesicles (DAVs) to form the CV by recruiting SNARE complex component SNAP29. Is required for recruitment of transition zone proteins CEP290, RPGRIP1L, TMEM67 and B9D2, and of IFT20 following DAV reorganization before Rab8-dependent ciliary membrane extension. Required for the loss of CCP110 form the mother centriole essential for the maturation of the basal body during ciliogenesis. The protein is EH domain-containing protein 1 of Pongo abelii (Sumatran orangutan).